The primary structure comprises 434 residues: Enolase (434 aa).

A (2R)-2-phosphoglycerate-binding site is contributed by glutamine 163. The active-site Proton donor is the glutamate 205. Mg(2+)-binding residues include aspartate 243, glutamate 291, and aspartate 318. (2R)-2-phosphoglycerate contacts are provided by lysine 343, arginine 372, serine 373, and lysine 394. Catalysis depends on lysine 343, which acts as the Proton acceptor.

The protein belongs to the enolase family. Mg(2+) is required as a cofactor.

Its subcellular location is the cytoplasm. It is found in the secreted. It localises to the cell surface. It carries out the reaction (2R)-2-phosphoglycerate = phosphoenolpyruvate + H2O. It functions in the pathway carbohydrate degradation; glycolysis; pyruvate from D-glyceraldehyde 3-phosphate: step 4/5. In terms of biological role, catalyzes the reversible conversion of 2-phosphoglycerate (2-PG) into phosphoenolpyruvate (PEP). It is essential for the degradation of carbohydrates via glycolysis. This chain is Enolase, found in Fusobacterium nucleatum subsp. nucleatum (strain ATCC 25586 / DSM 15643 / BCRC 10681 / CIP 101130 / JCM 8532 / KCTC 2640 / LMG 13131 / VPI 4355).